Here is a 306-residue protein sequence, read N- to C-terminus: Agmatinase (306 aa).

Residues His-128, Asp-151, His-153, Asp-155, Asp-232, and Asp-234 each coordinate Mn(2+).

This sequence belongs to the arginase family. Agmatinase subfamily. Mn(2+) is required as a cofactor.

The catalysed reaction is agmatine + H2O = urea + putrescine. The protein operates within amine and polyamine biosynthesis; putrescine biosynthesis via agmatine pathway; putrescine from agmatine: step 1/1. Functionally, catalyzes the formation of putrescine from agmatine. The protein is Agmatinase (speB) of Proteus mirabilis.